A 132-amino-acid polypeptide reads, in one-letter code: Small ribosomal subunit protein uS8c (132 aa).

Belongs to the universal ribosomal protein uS8 family. In terms of assembly, part of the 30S ribosomal subunit.

Its subcellular location is the plastid. The protein resides in the chloroplast. Functionally, one of the primary rRNA binding proteins, it binds directly to 16S rRNA central domain where it helps coordinate assembly of the platform of the 30S subunit. This Chaetosphaeridium globosum (Charophycean green alga) protein is Small ribosomal subunit protein uS8c (rps8).